Reading from the N-terminus, the 385-residue chain is S-adenosylmethionine synthase (385 aa).

H16 contributes to the ATP binding site. D18 serves as a coordination point for Mg(2+). Residue E44 participates in K(+) binding. Residues E57 and Q100 each coordinate L-methionine. The flexible loop stretch occupies residues 100 to 110; the sequence is QSPDINQGVDR. Residues 164–166, 230–231, D239, 245–246, A262, and K266 contribute to the ATP site; these read DGK, KF, and RK. Residue D239 participates in L-methionine binding. Position 270 (K270) interacts with L-methionine.

This sequence belongs to the AdoMet synthase family. In terms of assembly, homotetramer; dimer of dimers. Requires Mg(2+) as cofactor. It depends on K(+) as a cofactor.

The protein localises to the cytoplasm. The catalysed reaction is L-methionine + ATP + H2O = S-adenosyl-L-methionine + phosphate + diphosphate. The protein operates within amino-acid biosynthesis; S-adenosyl-L-methionine biosynthesis; S-adenosyl-L-methionine from L-methionine: step 1/1. Catalyzes the formation of S-adenosylmethionine (AdoMet) from methionine and ATP. The overall synthetic reaction is composed of two sequential steps, AdoMet formation and the subsequent tripolyphosphate hydrolysis which occurs prior to release of AdoMet from the enzyme. The chain is S-adenosylmethionine synthase from Helicobacter pylori (strain G27).